A 357-amino-acid polypeptide reads, in one-letter code: Homoserine O-succinyltransferase (357 aa).

The active-site Acyl-thioester intermediate is the Cys-146. Substrate is bound by residues Lys-167 and Ser-196. The Proton acceptor role is filled by His-239. The active site involves Glu-241. Position 253 (Arg-253) interacts with substrate.

It belongs to the MetA family.

It localises to the cytoplasm. The enzyme catalyses L-homoserine + succinyl-CoA = O-succinyl-L-homoserine + CoA. It participates in amino-acid biosynthesis; L-methionine biosynthesis via de novo pathway; O-succinyl-L-homoserine from L-homoserine: step 1/1. Its function is as follows. Transfers a succinyl group from succinyl-CoA to L-homoserine, forming succinyl-L-homoserine. This is Homoserine O-succinyltransferase from Allochromatium vinosum (strain ATCC 17899 / DSM 180 / NBRC 103801 / NCIMB 10441 / D) (Chromatium vinosum).